The chain runs to 1291 residues: GRB10-interacting GYF protein 2 (1291 aa).

Alanine 2 carries the post-translational modification N-acetylalanine. A phosphoserine mark is found at serine 19, serine 26, and serine 30. Residues arginine 107, arginine 119, and arginine 121 each carry the omega-N-methylarginine modification. The segment at 112–132 (GTVVGAPRGRSSSRGRGRGRG) is disordered. The residue at position 140 (serine 140) is a Phosphoserine. Disordered stretches follow at residues 148–196 (FGRG…RKHE), 209–248 (REEQ…GWRE), and 267–484 (RGYR…TEPD). Arginine 150 bears the Omega-N-methylarginine mark. A compositionally biased stretch (basic and acidic residues) spans 152–183 (GGREMHRSQSWEERGDRRFEKPGRKDVGRPNF). Phosphoserine is present on residues serine 161, serine 190, and serine 237. A compositionally biased stretch (basic and acidic residues) spans 226-248 (SRRDGERWRPHSPDGPRSTGWRE). The DDX6 binding motif signature appears at 281-311 (DDRDSLPEWCLEDAEEEMGTFDSSGAFLSLK). The span at 290 to 299 (CLEDAEEEMG) shows a compositional bias: acidic residues. Positions 313-364 (VQKEPIPEEQEMDFRPVEEGEERSDSDSSHNEEAKEPDKTNRREGEKTDRAG) are enriched in basic and acidic residues. Residues 371–393 (VPQTSLSSARPGTPSDHQPQEAT) show a composition bias toward polar residues. Position 383 is a phosphothreonine (threonine 383). The span at 394-415 (QFERKDEPKAEQVEKAEEENRS) shows a compositional bias: basic and acidic residues. The region spanning 534–582 (MQKWYYKDPQGEIQGPFNNQEMAEWFQAGYFTMSLLVKRACDESFQPLG) is the GYF domain. The interval 548 to 564 (GPFNNQEMAEWFQAGYF) is required for GRB10-binding. A Phosphoserine modification is found at serine 594. Disordered regions lie at residues 732 to 794 (KAKA…QEEA), 846 to 937 (EEAA…SNTA), 958 to 998 (ERQL…SKPA), 1011 to 1053 (EARQ…SVWG), and 1090 to 1118 (KEVG…NRQN). Residues 846–898 (EEAAKWAREEEEAQRRLEENRLRMEEEAARLRHEEEERKRKELELQRQKDLMR) show a composition bias toward basic and acidic residues. Over residues 899–924 (QRQQQQEALRRLQQQQQQQQLAQMKL) the composition is skewed to low complexity. Residues 925–937 (PSSSTWGQQSNTA) are compositionally biased toward polar residues. Residues 958 to 973 (ERQLREEQRRQQRELM) show a composition bias toward basic and acidic residues. The segment covering 977–986 (QQQQQQQQQQ) has biased composition (low complexity). Phosphoserine is present on serine 995. The segment covering 1015-1031 (MQKQQQQQQQQQQQHQQ) has biased composition (low complexity). Polar residues predominate over residues 1032–1053 (SNRARNSTHSNLHTSLGNSVWG). Over residues 1096–1110 (NSTNKNKNNASLSKS) the composition is skewed to low complexity. Lysine 1129 participates in a covalent cross-link: Glycyl lysine isopeptide (Lys-Gly) (interchain with G-Cter in SUMO2). Disordered regions lie at residues 1202–1223 (AKQK…QDSV) and 1239–1263 (QSNN…KMVR). Residues 1208 to 1220 (QQRQQQQQQQQQQ) are compositionally biased toward low complexity. Serine 1276 is subject to Phosphoserine.

The protein belongs to the GIGYF family. As to quaternary structure, component of the 4EHP-GYF2 complex, at least composed of EIF4E2, GIGYF2 and ZNF598. Interacts (via the 4EHP-binding motif) with EIF4E2; the interaction is direct. Interacts with ZFP36/TTP (via P-P-P-P-G repeats); the interaction is direct. Interacts with GRB10. Interacts (via DDX6 motif) with DDX6 (via RecA-like domain 2). In terms of tissue distribution, expressed in heart, liver, kidney and brain as well as in testis.

Key component of the 4EHP-GYF2 complex, a multiprotein complex that acts as a repressor of translation initiation. In the 4EHP-GYF2 complex, acts as a factor that bridges EIF4E2 to ZFP36/TTP, linking translation repression with mRNA decay. Also recruits and bridges the association of the 4EHP complex with the decapping effector protein DDX6, which is required for the ZFP36/TTP-mediated down-regulation of AU-rich mRNA. May act cooperatively with GRB10 to regulate tyrosine kinase receptor signaling, including IGF1 and insulin receptors. In association with EIF4E2, assists ribosome-associated quality control (RQC) by sequestering the mRNA cap, blocking ribosome initiation and decreasing the translational load on problematic messages. Part of a pathway that works in parallel to RQC-mediated degradation of the stalled nascent polypeptide. GIGYF2 and EIF4E2 work downstream and independently of ZNF598, which seems to work as a scaffold that can recruit them to faulty mRNA even if alternative recruitment mechanisms may exist. The sequence is that of GRB10-interacting GYF protein 2 from Mus musculus (Mouse).